The following is a 178-amino-acid chain: ATP synthase subunit delta (178 aa).

Belongs to the ATPase delta chain family. F-type ATPases have 2 components, F(1) - the catalytic core - and F(0) - the membrane proton channel. F(1) has five subunits: alpha(3), beta(3), gamma(1), delta(1), epsilon(1). F(0) has three main subunits: a(1), b(2) and c(10-14). The alpha and beta chains form an alternating ring which encloses part of the gamma chain. F(1) is attached to F(0) by a central stalk formed by the gamma and epsilon chains, while a peripheral stalk is formed by the delta and b chains.

The protein resides in the cell membrane. In terms of biological role, f(1)F(0) ATP synthase produces ATP from ADP in the presence of a proton or sodium gradient. F-type ATPases consist of two structural domains, F(1) containing the extramembraneous catalytic core and F(0) containing the membrane proton channel, linked together by a central stalk and a peripheral stalk. During catalysis, ATP synthesis in the catalytic domain of F(1) is coupled via a rotary mechanism of the central stalk subunits to proton translocation. This protein is part of the stalk that links CF(0) to CF(1). It either transmits conformational changes from CF(0) to CF(1) or is implicated in proton conduction. The sequence is that of ATP synthase subunit delta from Streptococcus gordonii (strain Challis / ATCC 35105 / BCRC 15272 / CH1 / DL1 / V288).